The chain runs to 580 residues: 2-succinyl-5-enolpyruvyl-6-hydroxy-3-cyclohexene-1-carboxylate synthase (580 aa).

The segment at Leu178 to Asp199 is disordered.

This sequence belongs to the TPP enzyme family. MenD subfamily. Homodimer. Requires Mg(2+) as cofactor. It depends on Mn(2+) as a cofactor. Thiamine diphosphate is required as a cofactor.

It carries out the reaction isochorismate + 2-oxoglutarate + H(+) = 5-enolpyruvoyl-6-hydroxy-2-succinyl-cyclohex-3-ene-1-carboxylate + CO2. Its pathway is quinol/quinone metabolism; 1,4-dihydroxy-2-naphthoate biosynthesis; 1,4-dihydroxy-2-naphthoate from chorismate: step 2/7. It participates in quinol/quinone metabolism; menaquinone biosynthesis. Functionally, catalyzes the thiamine diphosphate-dependent decarboxylation of 2-oxoglutarate and the subsequent addition of the resulting succinic semialdehyde-thiamine pyrophosphate anion to isochorismate to yield 2-succinyl-5-enolpyruvyl-6-hydroxy-3-cyclohexene-1-carboxylate (SEPHCHC). The chain is 2-succinyl-5-enolpyruvyl-6-hydroxy-3-cyclohexene-1-carboxylate synthase from Roseiflexus castenholzii (strain DSM 13941 / HLO8).